A 652-amino-acid chain; its full sequence is Regulator of DNA class I crossover intermediates 1 (652 aa).

A DNA-binding region (binds DNA containing a D-loop) is located at residues 1 to 228 (MNWVGGSRSR…APYKRTNSSE (228 aa)). Disordered regions lie at residues 464–512 (YLES…KATE) and 621–652 (EKES…SNSL). Residues 467 to 477 (SSQSSQSASYS) are compositionally biased toward low complexity. Composition is skewed to polar residues over residues 478–491 (PRPT…STDL) and 639–652 (DTTG…SNSL).

As to quaternary structure, interacts with MSH5. Interacts with TEX11. In terms of tissue distribution, expressed mainly in testis (at protein level). Expressed in spermatogonia and enriched in spermatocytes; absent in testicular somatic cells (at protein level). No expression or low levels in other tissues.

It localises to the chromosome. Functionally, involved in recombination, probably acting by stabilizing recombination intermediates during meiotic crossover formation. Required for normal germline development and fertility. Required for meiotic progression, complete chromosomal synapsis and crossover formation. Binds double-stranded DNA. However, also binds branched DNA molecules, such as those containing a D-loop or Holliday junction structure. Probably not required for formation of DNA double-strand breaks (DSBs). Also binds RNA in an RNA structure-independent manner, with a preference for binding 3'-UTR regions of mRNAs; may stabilize bound RNAs. In Mus musculus (Mouse), this protein is Regulator of DNA class I crossover intermediates 1.